Consider the following 905-residue polypeptide: uncharacterized protein (905 aa).

4 WD repeats span residues 42-82, 86-128, 136-175, and 177-217; these read RSLK…FQAV, GYAR…SDPK, STLDGVSSVCYKKDTPLLLTGSTSRSVHIIDTRQQLDSVS, and VNTQ…SDNY. Phosphoserine is present on residues Ser-394 and Ser-397.

It belongs to the WD repeat mio family.

This is an uncharacterized protein from Schizosaccharomyces pombe (strain 972 / ATCC 24843) (Fission yeast).